Reading from the N-terminus, the 1697-residue chain is Histone acetyltransferase HAC1 (1697 aa).

Residues 1-16 show a composition bias toward polar residues; the sequence is MNVQAHMSGQVSNQGT. Disordered regions lie at residues 1-45, 202-221, 385-439, 555-574, 583-631, and 843-901; these read MNVQ…LGPS, SNFGLGSGGNMSSMSSQRNT, SFQA…QQQR, HWQSQSQEHTQMSNSMSNER, RMSG…GNRD, and IGIA…GKPE. 2 stretches are compositionally biased toward low complexity: residues 17–28 and 202–217; these read MSQQNGNSQMQN and SNFGLGSGGNMSSMSS. Residues 385-398 show a composition bias toward polar residues; sequence SFQAVSRTSSSLSH. A compositionally biased stretch (low complexity) spans 399–439; the sequence is QQQQFQQQPNRFQQQPNQFHQQQQQFLHQQQLKQQSQQQQR. 2 stretches are compositionally biased toward polar residues: residues 556 to 571 and 584 to 628; these read WQSQSQEHTQMSNSMS and MSGT…NGNG. The TAZ-type 1 zinc finger occupies 629–709; the sequence is NRDPRFKNQQ…EPNCPVCIPV (81 aa). The segment covering 873–901 has biased composition (basic and acidic residues); it reads TKVEKEPESLKKENLAESTEHTSKSGKPE. A PHD-type zinc finger spans residues 989–1066; it reads HYFCIPCYNE…EYTCPYCFIA (78 aa). A CBP/p300-type HAT domain is found at 1081–1517; that stretch reads VLGAKDLPRT…VLYHLHNPTA (437 aa). Residues 1204–1206, 1223–1224, and Trp-1279 each bind acetyl-CoA; these read LDS and RT. 2 consecutive ZZ-type zinc fingers follow at residues 1399–1462 and 1519–1572; these read HLQP…IMDI and AFVT…SLAD. Positions 1404, 1407, 1419, 1422, 1428, 1431, 1444, 1452, 1524, 1527, 1539, 1542, 1548, 1551, 1560, and 1562 each coordinate Zn(2+). The segment at 1579-1662 adopts a TAZ-type 2 zinc-finger fold; the sequence is EARQLRVLQL…ECHVPRCRDL (84 aa).

Rosette leaves, stems and flowers.

It localises to the nucleus. It carries out the reaction L-lysyl-[protein] + acetyl-CoA = N(6)-acetyl-L-lysyl-[protein] + CoA + H(+). In terms of biological role, acetyltransferase enzyme. Acetylates histones, giving a specific tag for transcriptional activation. The sequence is that of Histone acetyltransferase HAC1 (HAC1) from Arabidopsis thaliana (Mouse-ear cress).